Here is a 182-residue protein sequence, read N- to C-terminus: NADH-quinone oxidoreductase subunit B 2 (182 aa).

[4Fe-4S] cluster-binding residues include C47, C48, C113, and C142.

Belongs to the complex I 20 kDa subunit family. As to quaternary structure, NDH-1 is composed of 14 different subunits. Subunits NuoB, C, D, E, F, and G constitute the peripheral sector of the complex. [4Fe-4S] cluster serves as cofactor.

It localises to the cell inner membrane. It catalyses the reaction a quinone + NADH + 5 H(+)(in) = a quinol + NAD(+) + 4 H(+)(out). In terms of biological role, NDH-1 shuttles electrons from NADH, via FMN and iron-sulfur (Fe-S) centers, to quinones in the respiratory chain. The immediate electron acceptor for the enzyme in this species is believed to be ubiquinone. Couples the redox reaction to proton translocation (for every two electrons transferred, four hydrogen ions are translocated across the cytoplasmic membrane), and thus conserves the redox energy in a proton gradient. The protein is NADH-quinone oxidoreductase subunit B 2 of Anaeromyxobacter sp. (strain K).